Here is a 113-residue protein sequence, read N- to C-terminus: Outer membrane protein assembly factor BamE (113 aa).

Residues 1–19 (MRCKTLTAAAAVLLMLTAG) form the signal peptide. The N-palmitoyl cysteine moiety is linked to residue Cys20. A lipid anchor (S-diacylglycerol cysteine) is attached at Cys20.

This sequence belongs to the BamE family. In terms of assembly, part of the Bam complex, which is composed of the outer membrane protein BamA, and four lipoproteins BamB, BamC, BamD and BamE.

It localises to the cell outer membrane. Functionally, part of the outer membrane protein assembly complex, which is involved in assembly and insertion of beta-barrel proteins into the outer membrane. This Escherichia coli O6:H1 (strain CFT073 / ATCC 700928 / UPEC) protein is Outer membrane protein assembly factor BamE.